A 113-amino-acid chain; its full sequence is Prefoldin subunit beta (113 aa).

Belongs to the prefoldin subunit beta family. As to quaternary structure, heterohexamer of two alpha and four beta subunits.

The protein localises to the cytoplasm. Molecular chaperone capable of stabilizing a range of proteins. Seems to fulfill an ATP-independent, HSP70-like function in archaeal de novo protein folding. The sequence is that of Prefoldin subunit beta (pfdB) from Methanocaldococcus jannaschii (strain ATCC 43067 / DSM 2661 / JAL-1 / JCM 10045 / NBRC 100440) (Methanococcus jannaschii).